The primary structure comprises 317 residues: Probable cell division protein WhiA (317 aa).

A DNA-binding region (H-T-H motif) is located at residues 281–314 (SLKELGQMLDPPVGKSGINHRLRRIEKIAEELRK).

It belongs to the WhiA family.

Involved in cell division and chromosome segregation. This Clostridium novyi (strain NT) protein is Probable cell division protein WhiA.